The chain runs to 96 residues: Co-chaperonin GroES (96 aa).

This sequence belongs to the GroES chaperonin family. Heptamer of 7 subunits arranged in a ring. Interacts with the chaperonin GroEL.

The protein localises to the cytoplasm. Its function is as follows. Together with the chaperonin GroEL, plays an essential role in assisting protein folding. The GroEL-GroES system forms a nano-cage that allows encapsulation of the non-native substrate proteins and provides a physical environment optimized to promote and accelerate protein folding. GroES binds to the apical surface of the GroEL ring, thereby capping the opening of the GroEL channel. In Ralstonia nicotianae (strain ATCC BAA-1114 / GMI1000) (Ralstonia solanacearum), this protein is Co-chaperonin GroES.